A 250-amino-acid polypeptide reads, in one-letter code: MNKKEKRIVAIAAAFALCFGISPAVNAMHIMEGYLPPKYCITWGILSIPFLVAGYFSIKKTVSKQHRSITMLAMAGAFVFVLSSLKIPSVTGSCSHMTGTGLGAILFGPSAVSILGIIVLIFQAILLAHGGLTTLGANTFSMAIAGPFVSFGIYKLCQKLKVNKLSGIFLAAFVGDLFTYCVTSIQLALAYPSSNGGVGASALKFLAVFAPTQVPLAIIEGILTVVIMIGLETYAKAELNDLGLVNGGIN.

The N-terminal stretch at 1 to 26 (MNKKEKRIVAIAAAFALCFGISPAVN) is a signal peptide. A run of 6 helical transmembrane segments spans residues 38–58 (KYCI…YFSI), 68–88 (SITM…LKIP), 102–122 (LGAI…VLIF), 134–154 (TLGA…FGIY), 165–185 (LSGI…VTSI), and 209–229 (FAPT…VIMI).

The protein belongs to the CbiM family. Forms an energy-coupling factor (ECF) transporter complex composed of an ATP-binding protein (A component, CbiO), a transmembrane protein (T component, CbiQ) and 2 possible substrate-capture proteins (S components, CbiM and CbiN) of unknown stoichimetry.

It is found in the cell membrane. It participates in cofactor biosynthesis; adenosylcobalamin biosynthesis. Its function is as follows. Part of the energy-coupling factor (ECF) transporter complex CbiMNOQ involved in cobalt import. The polypeptide is Cobalt transport protein CbiM (Lachnoclostridium phytofermentans (strain ATCC 700394 / DSM 18823 / ISDg) (Clostridium phytofermentans)).